The primary structure comprises 400 residues: Enoyl-[acyl-carrier-protein] reductase [NADH] (400 aa).

NAD(+)-binding positions include 48 to 53 (GSSSGY), 74 to 75 (FE), 111 to 112 (DA), and 139 to 140 (LA). Residue tyrosine 225 coordinates substrate. The active-site Proton donor is the tyrosine 235. Residues lysine 244 and 273 to 275 (VVT) contribute to the NAD(+) site.

This sequence belongs to the TER reductase family. Monomer.

The catalysed reaction is a 2,3-saturated acyl-[ACP] + NAD(+) = a (2E)-enoyl-[ACP] + NADH + H(+). It participates in lipid metabolism; fatty acid biosynthesis. Its function is as follows. Involved in the final reduction of the elongation cycle of fatty acid synthesis (FAS II). Catalyzes the reduction of a carbon-carbon double bond in an enoyl moiety that is covalently linked to an acyl carrier protein (ACP). This chain is Enoyl-[acyl-carrier-protein] reductase [NADH], found in Shewanella oneidensis (strain ATCC 700550 / JCM 31522 / CIP 106686 / LMG 19005 / NCIMB 14063 / MR-1).